The following is a 1276-amino-acid chain: Sterol regulatory element-binding protein cleavage-activating protein (1276 aa).

Residues 1–18 lie on the Cytoplasmic side of the membrane; that stretch reads MTLTERLREKISQAFYNH. Residues 19–39 form a helical membrane-spanning segment; that stretch reads GLLCASYPIPIILFTGLCILA. Residues 40–279 are Lumenal-facing; sequence CCYPLLKLPL…NLVHVHFKEE (240 aa). Residues 46–284 form a loop-1 region; that stretch reads KLPLPGTGPV…HFKEEIGIAE (239 aa). Residues 60–81 form a disordered region; the sequence is PVKGYSPPPADSDHKQGEPSEQ. Asn-263 carries N-linked (GlcNAc...) asparagine glycosylation. A helical membrane pass occupies residues 280 to 300; sequence IGIAELIPLVTTYIILFAYIY. One can recognise an SSD domain in the interval 284–442; sequence ELIPLVTTYI…MLFFTTVLSI (159 aa). Topologically, residues 301 to 312 are cytoplasmic; the sequence is FSTRKIDMVKSK. The chain crosses the membrane as a helical span at residues 313 to 333; that stretch reads WGLALAAVVTVLSSLLMSVGL. The Lumenal segment spans residues 334–344; sequence CTLFGLTPTLN. The chain crosses the membrane as a helical span at residues 345–365; that stretch reads GGEIFPYLVVVIGLENVLVLT. Over 366–401 the chain is Cytoplasmic; sequence KSVVSTPVDLEVKLRIAQGLSSESWSIMKNVATELG. The helical transmembrane segment at 402–422 threads the bilayer; sequence IILIGYFTLVPAIQEFCLFAV. Position 423 (Val-423) is a topological domain, lumenal. A helical transmembrane segment spans residues 424–444; sequence GLVSDFFLQMLFFTTVLSIDI. The Cytoplasmic segment spans residues 445–518; the sequence is RRMELADLNK…FLARTRLAQR (74 aa). Residues 447 to 452 carry the ER export signal motif; sequence MELADL. Residues Lys-454 and Lys-466 each participate in a glycyl lysine isopeptide (Lys-Gly) (interchain with G-Cter in ubiquitin) cross-link. Residues 519–539 traverse the membrane as a helical segment; that stretch reads LIMAGTVVWIGILVYTDPAGL. The tract at residues 535–710 is loop-7; sequence DPAGLRTYLA…QTHGDITLYK (176 aa). Residues 540–707 are Lumenal-facing; that stretch reads RTYLAAQVTE…GGTQTHGDIT (168 aa). 2 N-linked (GlcNAc...) asparagine glycosylation sites follow: Asn-590 and Asn-641. A helical transmembrane segment spans residues 708–728; the sequence is LYKVAALGLAAGIVLVLLLLC. Residues 729–1276 are Cytoplasmic-facing; it reads LYRVLCPRNY…YVPSVLEKLD (548 aa). Residues 731 to 1276 are interaction with SREBF2; that stretch reads RVLCPRNYGQ…YVPSVLEKLD (546 aa). The stretch at 771–811 is one WD 1 repeat; it reads VLRGHLMDIECLASDGMLLVSCCLAGQVCVWDAQTGDCLTR. Residues Ser-821, Ser-837, Ser-843, Ser-850, Ser-905, and Ser-934 each carry the phosphoserine modification. Residues 834-903 are disordered; that stretch reads ERLSDGGKAS…RHRAGCGRSR (70 aa). The disordered stretch occupies residues 928–958; the sequence is SALRPPSPGPPLPQASQEEGTAPEKGSPPLA. 2 WD repeats span residues 949-999 and 1002-1039; these read APEK…LCCS and EISSGITALVFLDRRIVAARLNGSLDFFSLETHTSLSP. Arg-1048 bears the Omega-N-methylarginine mark. WD repeat units follow at residues 1074–1111, 1114–1152, 1155–1192, and 1194–1232; these read AHQKPITALRAAAGRLVTGSQDHTLRVFRLEDSCCLFT, GHSGAITTVYIDQTMVLASGGQDGAICLWDVLTGSRVSH, AHRGDVTSLTCTTSCVISSGLDDFINIWDRSTGIKLYS, and QQDLGCGASLGVISDNLLVTGGQGCVSFWDLNYGDLLQT.

It belongs to the WD repeat SCAP family. In terms of assembly, membrane region forms a homotetramer. Component of the SCAP-SREBP complex (composed of SCAP and SREBF1/SREBP1 or SREBF2/SREBP2); interacts with SREBF1/SREBP1 or SREBF2/SREBP2 through its C-terminal cytoplasmic domain. Forms a ternary complex with INSIG1 or INSIG2 through its transmembrane domains at high sterol concentrations. Interacts with PAQR3; the interaction anchors the SCAP-SREBP complex to the Golgi apparatus in low cholesterol conditions. Interacts with the SEC23-SEC24 complex in a SAR1-GTP-dependent manner through an ER export signal in its third cytoplasmic loop. Interacts with RNF139; the interaction inhibits the interaction of SCAP with SEC24B and hampering the ER to Golgi transport of the SCAP-SREBP complex. Interacts with SPRING1. In terms of processing, ubiquitinated at Lys-454 and Lys-466. RNF145 triggers ubiquitination of SCAP, likely inhibiting SCAP-SREBP complex transport to the Golgi apparatus and the subsequent processing/maturation of SREBF2/SREBP2.

Its subcellular location is the endoplasmic reticulum membrane. It localises to the golgi apparatus membrane. The protein localises to the cytoplasmic vesicle. The protein resides in the COPII-coated vesicle membrane. In terms of biological role, escort protein required for cholesterol as well as lipid homeostasis. Regulates export of the SCAP-SREBP complex from the endoplasmic reticulum to the Golgi upon low cholesterol, thereby regulating the processing of sterol regulatory element-binding proteins (SREBPs) SREBF1/SREBP1 and SREBF2/SREBP2. At high sterol concentrations, formation of a ternary complex with INSIG (INSIG1 or INSIG2) leads to mask the ER export signal in SCAP, promoting retention of the complex in the endoplasmic reticulum. Low sterol concentrations trigger release of INSIG, a conformational change in the SSD domain of SCAP, unmasking of the ER export signal, promoting recruitment into COPII-coated vesicles and transport of the SCAP-SREBP to the Golgi: in the Golgi, SREBPs are then processed, releasing the transcription factor fragment of SREBPs from the membrane, its import into the nucleus and up-regulation of LDLR, INSIG1 and the mevalonate pathway. Binds cholesterol via its SSD domain. The chain is Sterol regulatory element-binding protein cleavage-activating protein from Rattus norvegicus (Rat).